Consider the following 295-residue polypeptide: Indole-3-glycerol phosphate synthase (295 aa).

This sequence belongs to the TrpC family.

It catalyses the reaction 1-(2-carboxyphenylamino)-1-deoxy-D-ribulose 5-phosphate + H(+) = (1S,2R)-1-C-(indol-3-yl)glycerol 3-phosphate + CO2 + H2O. Its pathway is amino-acid biosynthesis; L-tryptophan biosynthesis; L-tryptophan from chorismate: step 4/5. The sequence is that of Indole-3-glycerol phosphate synthase from Synechococcus sp. (strain ATCC 27144 / PCC 6301 / SAUG 1402/1) (Anacystis nidulans).